Reading from the N-terminus, the 311-residue chain is HPr kinase/phosphorylase (311 aa).

Active-site residues include histidine 139 and lysine 160. 154–161 lines the ATP pocket; sequence GDSGVGKS. Serine 161 is a binding site for Mg(2+). Aspartate 178 functions as the Proton acceptor; for phosphorylation activity. Proton donor; for dephosphorylation activity in the catalytic mechanism. An important for the catalytic mechanism of both phosphorylation and dephosphorylation region spans residues 202–211; sequence LEIRGIGIID. Glutamate 203 is a Mg(2+) binding site. The active site involves arginine 244. Positions 265-270 are important for the catalytic mechanism of dephosphorylation; the sequence is PVKTGR.

Belongs to the HPrK/P family. In terms of assembly, homohexamer. It depends on Mg(2+) as a cofactor.

The enzyme catalyses [HPr protein]-L-serine + ATP = [HPr protein]-O-phospho-L-serine + ADP + H(+). It catalyses the reaction [HPr protein]-O-phospho-L-serine + phosphate + H(+) = [HPr protein]-L-serine + diphosphate. Functionally, catalyzes the ATP- as well as the pyrophosphate-dependent phosphorylation of a specific serine residue in HPr, a phosphocarrier protein of the phosphoenolpyruvate-dependent sugar phosphotransferase system (PTS). HprK/P also catalyzes the pyrophosphate-producing, inorganic phosphate-dependent dephosphorylation (phosphorolysis) of seryl-phosphorylated HPr (P-Ser-HPr). The two antagonistic activities of HprK/P are regulated by several intracellular metabolites, which change their concentration in response to the absence or presence of rapidly metabolisable carbon sources (glucose, fructose, etc.) in the growth medium. Therefore, by controlling the phosphorylation state of HPr, HPrK/P is a sensor enzyme that plays a major role in the regulation of carbon metabolism and sugar transport: it mediates carbon catabolite repression (CCR), and regulates PTS-catalyzed carbohydrate uptake and inducer exclusion. The polypeptide is HPr kinase/phosphorylase (Levilactobacillus brevis (strain ATCC 367 / BCRC 12310 / CIP 105137 / JCM 1170 / LMG 11437 / NCIMB 947 / NCTC 947) (Lactobacillus brevis)).